The sequence spans 360 residues: DNA replication and repair protein RecF (360 aa).

33 to 40 (GENGSGKT) serves as a coordination point for ATP.

This sequence belongs to the RecF family.

It is found in the cytoplasm. In terms of biological role, the RecF protein is involved in DNA metabolism; it is required for DNA replication and normal SOS inducibility. RecF binds preferentially to single-stranded, linear DNA. It also seems to bind ATP. The protein is DNA replication and repair protein RecF of Rickettsia conorii (strain ATCC VR-613 / Malish 7).